Here is a 382-residue protein sequence, read N- to C-terminus: Proton extrusion protein PxcA (382 aa).

4 consecutive transmembrane segments (helical) span residues 162–182, 257–277, 305–325, and 340–360; these read ILLLLVLVPLLVQQVSNTYIV, AIKNVLADLAGLMAFVVVCLV, IILFTDIFVGYHSPEGWTVLL, and FILLFIATFPVILATIFKYWI.

It belongs to the CemA family.

It is found in the cell inner membrane. Required for H(+) efflux immediately after light irradiation to form a rapid H(+) concentration gradient across the thylakoid membranes. Together with PxcL, contributes to transient H(+) uptake following dark to light transition. The sequence is that of Proton extrusion protein PxcA from Parasynechococcus marenigrum (strain WH8102).